A 564-amino-acid chain; its full sequence is Eukaryotic translation initiation factor 3 subunit L (564 aa).

The residue at position 2 (Ser-2) is an N-acetylserine. The PCI domain occupies 331 to 537 (DAIRVFANIL…IHIADTKVAR (207 aa)). An N6-acetyllysine mark is found at Lys-465 and Lys-549.

The protein belongs to the eIF-3 subunit L family. In terms of assembly, component of the eukaryotic translation initiation factor 3 (eIF-3) complex, which is composed of 13 subunits: EIF3A, EIF3B, EIF3C, EIF3D, EIF3E, EIF3F, EIF3G, EIF3H, EIF3I, EIF3J, EIF3K, EIF3L and EIF3M. The eIF-3 complex appears to include 3 stable modules: module A is composed of EIF3A, EIF3B, EIF3G and EIF3I; module B is composed of EIF3F, EIF3H, and EIF3M; and module C is composed of EIF3C, EIF3D, EIF3E, EIF3K and EIF3L. EIF3C of module C binds EIF3B of module A and EIF3H of module B, thereby linking the three modules. EIF3J is a labile subunit that binds to the eIF-3 complex via EIF3B. The eIF-3 complex may interact with RPS6KB1 under conditions of nutrient depletion. Mitogenic stimulation may lead to binding and activation of a complex composed of MTOR and RPTOR, leading to phosphorylation and release of RPS6KB1 and binding of EIF4B to eIF-3. Interacts with RRN3.

It localises to the cytoplasm. Its function is as follows. Component of the eukaryotic translation initiation factor 3 (eIF-3) complex, which is required for several steps in the initiation of protein synthesis. The eIF-3 complex associates with the 40S ribosome and facilitates the recruitment of eIF-1, eIF-1A, eIF-2:GTP:methionyl-tRNAi and eIF-5 to form the 43S pre-initiation complex (43S PIC). The eIF-3 complex stimulates mRNA recruitment to the 43S PIC and scanning of the mRNA for AUG recognition. The eIF-3 complex is also required for disassembly and recycling of post-termination ribosomal complexes and subsequently prevents premature joining of the 40S and 60S ribosomal subunits prior to initiation. The eIF-3 complex specifically targets and initiates translation of a subset of mRNAs involved in cell proliferation, including cell cycling, differentiation and apoptosis, and uses different modes of RNA stem-loop binding to exert either translational activation or repression. This chain is Eukaryotic translation initiation factor 3 subunit L (Eif3l), found in Mus musculus (Mouse).